The sequence spans 89 residues: Large ribosomal subunit protein eL34 (89 aa).

This sequence belongs to the eukaryotic ribosomal protein eL34 family.

This chain is Large ribosomal subunit protein eL34 (rpl34e), found in Methanocaldococcus jannaschii (strain ATCC 43067 / DSM 2661 / JAL-1 / JCM 10045 / NBRC 100440) (Methanococcus jannaschii).